A 249-amino-acid chain; its full sequence is Small ribosomal subunit protein uS3 (249 aa).

Residues 39 to 107 (VRAMLKKRLY…EVHLNIVEIR (69 aa)) enclose the KH type-2 domain. The segment at 215 to 249 (LDKRLATESGPAGEGGGRERGDRPDRGDRGRRDRG) is disordered. Over residues 230–249 (GGRERGDRPDRGDRGRRDRG) the composition is skewed to basic and acidic residues.

It belongs to the universal ribosomal protein uS3 family. As to quaternary structure, part of the 30S ribosomal subunit. Forms a tight complex with proteins S10 and S14.

Its function is as follows. Binds the lower part of the 30S subunit head. Binds mRNA in the 70S ribosome, positioning it for translation. This is Small ribosomal subunit protein uS3 from Caulobacter sp. (strain K31).